A 327-amino-acid polypeptide reads, in one-letter code: Annexin A8 (327 aa).

Annexin repeat units follow at residues 21–92 (FNPD…ALMY), 93–164 (PPYS…CLLQ), 177–249 (GLVL…TVVK), and 253–324 (NVHS…NLVG). Positions 266, 268, 270, and 310 each coordinate Ca(2+).

This sequence belongs to the annexin family.

Functionally, this protein is an anticoagulant protein that acts as an indirect inhibitor of the thromboplastin-specific complex, which is involved in the blood coagulation cascade. This Mus musculus (Mouse) protein is Annexin A8 (Anxa8).